The chain runs to 253 residues: uncharacterized protein (253 aa).

One can recognise a BPL/LPL catalytic domain in the interval 30-236 (AQGRQVAQLW…AVDDDAALMA (207 aa)).

This is an uncharacterized protein from Cupriavidus necator (strain ATCC 17699 / DSM 428 / KCTC 22496 / NCIMB 10442 / H16 / Stanier 337) (Ralstonia eutropha).